A 356-amino-acid chain; its full sequence is Glucose 1-dehydrogenase (356 aa).

The segment at 1–26 (MDAIVVSKADRTPRLVDRPRPDPTPG) is disordered. A compositionally biased stretch (basic and acidic residues) spans 8 to 21 (KADRTPRLVDRPRP). Position 38 (Asp-38) interacts with Zn(2+). Residue Thr-40 participates in substrate binding. Zn(2+)-binding residues include His-63 and Glu-64. The tract at residues 86–107 (TVRRPRGDPTPQFDRGQPDMAA) is disordered. Substrate-binding residues include Glu-113 and Glu-149. Glu-149 is a binding site for Zn(2+). Residues 180–183 (NGSL), 205–206 (RR), 270–272 (LGV), and 300–302 (SVN) each bind NADP(+). Asn-302 serves as a coordination point for substrate.

The protein belongs to the zinc-containing alcohol dehydrogenase family. Glucose 1-dehydrogenase subfamily. Requires Zn(2+) as cofactor.

It carries out the reaction D-glucose + NAD(+) = D-glucono-1,5-lactone + NADH + H(+). The enzyme catalyses D-glucose + NADP(+) = D-glucono-1,5-lactone + NADPH + H(+). Functionally, catalyzes the NAD(P)(+)-dependent oxidation of D-glucose to D-gluconate via gluconolactone. Can utilize both NAD(+) and NADP(+) as electron acceptor. Is involved in the degradation of glucose through a modified Entner-Doudoroff pathway. The sequence is that of Glucose 1-dehydrogenase from Halobacterium salinarum (strain ATCC 700922 / JCM 11081 / NRC-1) (Halobacterium halobium).